The sequence spans 241 residues: NLP effector protein 7 (241 aa).

The N-terminal stretch at 1–19 (MHLCALLIAAAGVLASVRA) is a signal peptide. The Conserved undecapeptide motif signature appears at 105–115 (AIMYAWYFPKA). Positions 125–131 (GSRHYWL) match the Conserved heptapeptide motif motif. An N-linked (GlcNAc...) asparagine glycan is attached at Asn144.

Belongs to the Necrosis inducing protein (NPP1) family.

It is found in the secreted. Its function is as follows. Secreted effector that acts as a pathogen-associated molecular pattern (PAMP) recognized by the plant immune system. Induces necrosis in Nicotiana benthamiana leaves and can induce Phytophthora capsici resistance in Nicotiana benthamiana. Also significantly improves disease resistance of Arabidopsis thaliana to Hyaloperonospora arabidopsidis. causes an inhibition of plant growth which is typically associated with enhanced immunity when over-expressed in Arabidopsis. This Plasmopara viticola (Downy mildew of grapevine) protein is NLP effector protein 7.